A 388-amino-acid polypeptide reads, in one-letter code: Protein kes1 (388 aa).

The protein belongs to the OSBP family.

Functionally, lipid transporter involved in lipid countertransport between the Golgi complex and membranes of the endoplasmic reticulum: specifically exchanges sterol with phosphatidylinositol 4-phosphate (PI4P), delivering sterol to the Golgi in exchange for PI4P, which is degraded by the SAC1 phosphatase in the endoplasmic reticulum. This is Protein kes1 (kes1) from Schizosaccharomyces pombe (strain 972 / ATCC 24843) (Fission yeast).